We begin with the raw amino-acid sequence, 236 residues long: Pyridoxal 5'-phosphate synthase subunit PdxT (236 aa).

61-63 (GES) contributes to the L-glutamine binding site. The active-site Nucleophile is C93. L-glutamine contacts are provided by residues R127 and 163–164 (IR). Catalysis depends on charge relay system residues H215 and E217.

It belongs to the glutaminase PdxT/SNO family. In terms of assembly, in the presence of PdxS, forms a dodecamer of heterodimers. Only shows activity in the heterodimer.

The catalysed reaction is aldehydo-D-ribose 5-phosphate + D-glyceraldehyde 3-phosphate + L-glutamine = pyridoxal 5'-phosphate + L-glutamate + phosphate + 3 H2O + H(+). It catalyses the reaction L-glutamine + H2O = L-glutamate + NH4(+). The protein operates within cofactor biosynthesis; pyridoxal 5'-phosphate biosynthesis. In terms of biological role, catalyzes the hydrolysis of glutamine to glutamate and ammonia as part of the biosynthesis of pyridoxal 5'-phosphate. The resulting ammonia molecule is channeled to the active site of PdxS. This Arthrobacter sp. (strain FB24) protein is Pyridoxal 5'-phosphate synthase subunit PdxT.